A 355-amino-acid polypeptide reads, in one-letter code: tRNA-specific 2-thiouridylase MnmA (355 aa).

Residues 7 to 14 and Leu33 each bind ATP; that span reads GLSGGVDS. Cys94 acts as the Nucleophile in catalysis. Residues Cys94 and Cys193 are joined by a disulfide bond. ATP is bound at residue Gly119. The interval 143-145 is interaction with tRNA; it reads KDQ. Cys193 acts as the Cysteine persulfide intermediate in catalysis. The segment at 298 to 299 is interaction with tRNA; that stretch reads RY.

This sequence belongs to the MnmA/TRMU family.

It localises to the cytoplasm. It catalyses the reaction S-sulfanyl-L-cysteinyl-[protein] + uridine(34) in tRNA + AH2 + ATP = 2-thiouridine(34) in tRNA + L-cysteinyl-[protein] + A + AMP + diphosphate + H(+). Catalyzes the 2-thiolation of uridine at the wobble position (U34) of tRNA, leading to the formation of s(2)U34. The chain is tRNA-specific 2-thiouridylase MnmA from Acaryochloris marina (strain MBIC 11017).